The chain runs to 409 residues: uncharacterized protein (409 aa).

An EAL domain is found at 1–209 (MRVFVARQPI…GHDLSTHFYS (209 aa)). Positions 203–392 (LSTHFYSYYE…GNQLDKEEAY (190 aa)) constitute an HDOD domain.

This is an uncharacterized protein from Bacillus subtilis (strain 168).